The sequence spans 506 residues: Anaerobic nitric oxide reductase transcription regulator NorR (506 aa).

Position 57 is a 4-aspartylphosphate (D57). The Sigma-54 factor interaction domain occupies 187 to 416; it reads MIGLSPAMTQ…LEHAIHRAVV (230 aa). ATP-binding positions include 215 to 222 and 278 to 287; these read GETGTGKE and ADNGTLFLDE. The H-T-H motif DNA-binding region spans 481–500; sequence WAASARALETDVANLHRLAK.

It participates in nitrogen metabolism; nitric oxide reduction. In terms of biological role, required for the expression of anaerobic nitric oxide (NO) reductase, acts as a transcriptional activator for at least the norVW operon. Activation also requires sigma-54. This chain is Anaerobic nitric oxide reductase transcription regulator NorR, found in Salmonella agona (strain SL483).